The following is a 225-amino-acid chain: UPF0758 protein Spea_3837 (225 aa).

Residues 102–224 enclose the MPN domain; the sequence is ILSDPDLTRD…IVSFAERGWI (123 aa). The Zn(2+) site is built by His-173, His-175, and Asp-186. Residues 173 to 186 carry the JAMM motif motif; that stretch reads HNHPSGIAEPSTAD.

Belongs to the UPF0758 family.

The polypeptide is UPF0758 protein Spea_3837 (Shewanella pealeana (strain ATCC 700345 / ANG-SQ1)).